The sequence spans 237 residues: Uridylate kinase (237 aa).

An ATP-binding site is contributed by 11-14 (KLSG). Gly53 serves as a coordination point for UMP. ATP contacts are provided by Gly54 and Arg58. Residues Asp73 and 134-141 (TGNPFFTT) each bind UMP. 3 residues coordinate ATP: Thr161, Tyr167, and Asp170.

This sequence belongs to the UMP kinase family. In terms of assembly, homohexamer.

It localises to the cytoplasm. The enzyme catalyses UMP + ATP = UDP + ADP. It participates in pyrimidine metabolism; CTP biosynthesis via de novo pathway; UDP from UMP (UMPK route): step 1/1. Inhibited by UTP. Its function is as follows. Catalyzes the reversible phosphorylation of UMP to UDP. The protein is Uridylate kinase of Paraburkholderia xenovorans (strain LB400).